The following is a 31-amino-acid chain: Photosystem II reaction center protein T (31 aa).

A helical transmembrane segment spans residues A3–F23.

This sequence belongs to the PsbT family. PSII is composed of 1 copy each of membrane proteins PsbA, PsbB, PsbC, PsbD, PsbE, PsbF, PsbH, PsbI, PsbJ, PsbK, PsbL, PsbM, PsbT, PsbX, PsbY, PsbZ, Psb30/Ycf12, at least 3 peripheral proteins of the oxygen-evolving complex and a large number of cofactors. It forms dimeric complexes.

It localises to the plastid. The protein resides in the cyanelle thylakoid membrane. Found at the monomer-monomer interface of the photosystem II (PS II) dimer, plays a role in assembly and dimerization of PSII. PSII is a light-driven water plastoquinone oxidoreductase, using light energy to abstract electrons from H(2)O, generating a proton gradient subsequently used for ATP formation. This chain is Photosystem II reaction center protein T, found in Cyanophora paradoxa.